A 354-amino-acid chain; its full sequence is Nucleoporin seh1 (354 aa).

6 WD repeats span residues aspartate 10–valine 49, alanine 55–serine 96, aspartate 112–glutamine 153, serine 161–valine 209, aspartate 216–serine 259, and glutamate 270–cysteine 309.

This sequence belongs to the WD repeat SEC13 family. As to quaternary structure, probable component of the nuclear pore complex (NPC). Component of the GATOR complex consisting of mio, Nup44A/Seh1, Im11, Nplr3, Nplr2, Wdr24, Wdr59 and Sec13. Within the GATOR complex, probable component of the GATOR2 subcomplex which is likely composed of mio, Nup44A/Seh1, Wdr24, Wdr59 and Sec13. Interacts with mio. Interacts with Wdr24. The GATOR2 complex associates with unmet in the absence of S-adenosyl-L-methionine; the mio-Wdr24-Nup44A subcomplex is essential and sufficient for this interaction while Wdr59 and Sec13 are dispensable. This association acts as a nutrient sensor to inhibit mTORC1 signaling in the absence of methionine. As to expression, expressed in ovarian cysts.

It localises to the nucleus envelope. The protein resides in the lysosome. Probable component of the nuclear pore complex (NPC). Involved in maintaining the localization of another nucleoporin Mgtor to the nuclear envelope of early meiotic female germline cells. It is not involved in recruiting the nucleoporins Mgtor, Nup107, Nup153 and FG-containing nucleoporins to the NPC. In terms of biological role, an essential component of the GATOR subcomplex GATOR2 which functions as an activator of the amino acid-sensing branch of the mTORC1 signaling pathway. The two GATOR subcomplexes, GATOR1 and GATOR2, regulate the mTORC1 pathway in order to mediate metabolic homeostasis, female gametogenesis and the response to amino acid limitation and complete starvation. GATOR2 activates the mTORC1 signaling pathway through the inhibition of the GATOR1 subcomplex, controlling the switch to cell proliferation growth under nutrient replete conditions and growth during female oocyte development. This component is required for activating mTORC1 specifically in germline cells to promote cell growth and maintain the oocyte fate, probably influences the organization and/or function of microtubules within ovarian cysts, and promotes accumulation of another GATOR2 complex member mio in germline and somatic tissues. GATOR1 and GATOR2 act at different stages of oogenesis to regulate mTORC1 in order to control meiotic entry and promote oocyte growth and development. After exactly four mitotic cyst divisions, the GATOR1 complex members (Iml1, Nprl2 and Nprl3) down-regulate mTORC1 to slow cellular metabolism and promote the mitotic/meiotic transition. At later stages of oogenesis, the mio and Nup44A components of the GATOR2 complex inhibit GATOR1 and thus activate mTORC1 to promote meiotic progression, and drive oocyte growth and development. In addition to its role in the regulation of the mTORC1 complex, functions independently of mTORC1 to prevent the inappropriate accumulation of autolysosomes in germline tissues. This chain is Nucleoporin seh1, found in Drosophila melanogaster (Fruit fly).